Here is a 495-residue protein sequence, read N- to C-terminus: UDP-N-acetylmuramate--L-alanine ligase (495 aa).

153–159 contacts ATP; that stretch reads GTHGKTT.

The protein belongs to the MurCDEF family.

It is found in the cytoplasm. It catalyses the reaction UDP-N-acetyl-alpha-D-muramate + L-alanine + ATP = UDP-N-acetyl-alpha-D-muramoyl-L-alanine + ADP + phosphate + H(+). It participates in cell wall biogenesis; peptidoglycan biosynthesis. Its function is as follows. Cell wall formation. The protein is UDP-N-acetylmuramate--L-alanine ligase of Gloeothece citriformis (strain PCC 7424) (Cyanothece sp. (strain PCC 7424)).